Reading from the N-terminus, the 208-residue chain is MKILFDFLPIALFFGMFKYAEGHKDWAAGLATDWLGFMVSGGVVGPAEAPVLLATVVVIVATLAQILWLKARGRKVDTMLWVSLALVTALGSATIYFHSESFIKWKPTVLYWVMGASLLVGELVFKKNGIKSLMGAQMSLPDAVWRKVNFSWVAFFAAMGCLNLWVAFNFPTSTWVNFKLFGGMGLMLVFVLAQAFFLNKHIKPDTTS.

Transmembrane regions (helical) follow at residues 49–69 (APVL…ILWL), 78–98 (TMLW…IYFH), 105–125 (WKPT…ELVF), 150–170 (FSWV…AFNF), and 178–198 (FKLF…AFFL).

This sequence belongs to the YciB family.

The protein resides in the cell inner membrane. In terms of biological role, plays a role in cell envelope biogenesis, maintenance of cell envelope integrity and membrane homeostasis. This is Inner membrane-spanning protein YciB from Polaromonas naphthalenivorans (strain CJ2).